A 242-amino-acid chain; its full sequence is Biosynthetic peptidoglycan transglycosylase (242 aa).

A helical membrane pass occupies residues 19 to 39 (LMVVLAIFWGGGIALFSVAPV).

Belongs to the glycosyltransferase 51 family.

The protein localises to the cell inner membrane. It carries out the reaction [GlcNAc-(1-&gt;4)-Mur2Ac(oyl-L-Ala-gamma-D-Glu-L-Lys-D-Ala-D-Ala)](n)-di-trans,octa-cis-undecaprenyl diphosphate + beta-D-GlcNAc-(1-&gt;4)-Mur2Ac(oyl-L-Ala-gamma-D-Glu-L-Lys-D-Ala-D-Ala)-di-trans,octa-cis-undecaprenyl diphosphate = [GlcNAc-(1-&gt;4)-Mur2Ac(oyl-L-Ala-gamma-D-Glu-L-Lys-D-Ala-D-Ala)](n+1)-di-trans,octa-cis-undecaprenyl diphosphate + di-trans,octa-cis-undecaprenyl diphosphate + H(+). It functions in the pathway cell wall biogenesis; peptidoglycan biosynthesis. Its function is as follows. Peptidoglycan polymerase that catalyzes glycan chain elongation from lipid-linked precursors. This is Biosynthetic peptidoglycan transglycosylase from Escherichia coli O81 (strain ED1a).